Consider the following 80-residue polypeptide: Defensin-like protein 46 (80 aa).

Positions 1–27 are cleaved as a signal peptide; it reads MGSTKTLVTCFLTIILAVSLSNHNVLA. Disulfide bonds link Cys40–Cys78, Cys44–Cys65, Cys50–Cys76, and Cys54–Cys77.

Belongs to the DEFL family.

The protein resides in the secreted. The chain is Defensin-like protein 46 from Arabidopsis thaliana (Mouse-ear cress).